Here is a 171-residue protein sequence, read N- to C-terminus: Peptide methionine sulfoxide reductase MsrA (171 aa).

Cys13 is an active-site residue.

Belongs to the MsrA Met sulfoxide reductase family.

It carries out the reaction L-methionyl-[protein] + [thioredoxin]-disulfide + H2O = L-methionyl-(S)-S-oxide-[protein] + [thioredoxin]-dithiol. It catalyses the reaction [thioredoxin]-disulfide + L-methionine + H2O = L-methionine (S)-S-oxide + [thioredoxin]-dithiol. In terms of biological role, has an important function as a repair enzyme for proteins that have been inactivated by oxidation. Catalyzes the reversible oxidation-reduction of methionine sulfoxide in proteins to methionine. In Mycobacterium ulcerans (strain Agy99), this protein is Peptide methionine sulfoxide reductase MsrA.